The sequence spans 89 residues: Small ribosomal subunit protein uS15 (89 aa).

Belongs to the universal ribosomal protein uS15 family. As to quaternary structure, part of the 30S ribosomal subunit. Forms a bridge to the 50S subunit in the 70S ribosome, contacting the 23S rRNA.

Functionally, one of the primary rRNA binding proteins, it binds directly to 16S rRNA where it helps nucleate assembly of the platform of the 30S subunit by binding and bridging several RNA helices of the 16S rRNA. Its function is as follows. Forms an intersubunit bridge (bridge B4) with the 23S rRNA of the 50S subunit in the ribosome. The chain is Small ribosomal subunit protein uS15 from Limosilactobacillus fermentum (strain NBRC 3956 / LMG 18251) (Lactobacillus fermentum).